Here is a 311-residue protein sequence, read N- to C-terminus: Glycine--tRNA ligase alpha subunit (311 aa).

It belongs to the class-II aminoacyl-tRNA synthetase family. As to quaternary structure, tetramer of two alpha and two beta subunits.

It localises to the cytoplasm. The enzyme catalyses tRNA(Gly) + glycine + ATP = glycyl-tRNA(Gly) + AMP + diphosphate. The chain is Glycine--tRNA ligase alpha subunit from Rhizobium meliloti (strain 1021) (Ensifer meliloti).